The primary structure comprises 807 residues: Sucrose synthase 2 (807 aa).

The interval 274–752 (MVFNVVILSP…GLKRIYERYT (479 aa)) is GT-B glycosyltransferase.

The protein belongs to the glycosyltransferase 1 family. Plant sucrose synthase subfamily. In terms of tissue distribution, detected in the whole plant but at lower levels. Predominantly expressed in developing siliques. Also detected in the root tip. Detected in the embryo, endosperm and seed coat (at the protein level).

It localises to the cytoplasm. Its subcellular location is the plastid membrane. The enzyme catalyses an NDP-alpha-D-glucose + D-fructose = a ribonucleoside 5'-diphosphate + sucrose + H(+). Sucrose-cleaving enzyme that provides UDP-glucose and fructose for various metabolic pathways. Modulates metabolic homeostasis and directs carbon towards starch synthesis in developing seeds. This chain is Sucrose synthase 2 (SUS2), found in Arabidopsis thaliana (Mouse-ear cress).